The following is a 132-amino-acid chain: Small ribosomal subunit protein uS8 (132 aa).

Belongs to the universal ribosomal protein uS8 family. Part of the 30S ribosomal subunit. Contacts proteins S5 and S12.

Its function is as follows. One of the primary rRNA binding proteins, it binds directly to 16S rRNA central domain where it helps coordinate assembly of the platform of the 30S subunit. The protein is Small ribosomal subunit protein uS8 of Methylocella silvestris (strain DSM 15510 / CIP 108128 / LMG 27833 / NCIMB 13906 / BL2).